The primary structure comprises 105 residues: Urease subunit beta (105 aa).

The protein belongs to the urease beta subunit family. As to quaternary structure, heterotrimer of UreA (gamma), UreB (beta) and UreC (alpha) subunits. Three heterotrimers associate to form the active enzyme.

The protein resides in the cytoplasm. The enzyme catalyses urea + 2 H2O + H(+) = hydrogencarbonate + 2 NH4(+). It functions in the pathway nitrogen metabolism; urea degradation; CO(2) and NH(3) from urea (urease route): step 1/1. This Prochlorococcus marinus (strain MIT 9313) protein is Urease subunit beta.